We begin with the raw amino-acid sequence, 358 residues long: Methionine aminopeptidase 2 (358 aa).

Position 111 (histidine 111) interacts with substrate. Aspartate 131, aspartate 142, and histidine 211 together coordinate a divalent metal cation. Histidine 219 is a substrate binding site. The a divalent metal cation site is built by glutamate 244 and glutamate 339.

Belongs to the peptidase M24A family. Methionine aminopeptidase eukaryotic type 2 subfamily. It depends on Co(2+) as a cofactor. Zn(2+) is required as a cofactor. The cofactor is Mn(2+). Requires Fe(2+) as cofactor.

It is found in the cytoplasm. It catalyses the reaction Release of N-terminal amino acids, preferentially methionine, from peptides and arylamides.. Its function is as follows. Cotranslationally removes the N-terminal methionine from nascent proteins. The N-terminal methionine is often cleaved when the second residue in the primary sequence is small and uncharged (Met-Ala-, Cys, Gly, Pro, Ser, Thr, or Val). This is Methionine aminopeptidase 2 from Laccaria bicolor (strain S238N-H82 / ATCC MYA-4686) (Bicoloured deceiver).